The sequence spans 220 residues: Deoxyribose-phosphate aldolase (220 aa).

Asp89 functions as the Proton donor/acceptor in the catalytic mechanism. Lys151 serves as the catalytic Schiff-base intermediate with acetaldehyde. The Proton donor/acceptor role is filled by Lys180.

This sequence belongs to the DeoC/FbaB aldolase family. DeoC type 1 subfamily.

The protein resides in the cytoplasm. The catalysed reaction is 2-deoxy-D-ribose 5-phosphate = D-glyceraldehyde 3-phosphate + acetaldehyde. It functions in the pathway carbohydrate degradation; 2-deoxy-D-ribose 1-phosphate degradation; D-glyceraldehyde 3-phosphate and acetaldehyde from 2-deoxy-alpha-D-ribose 1-phosphate: step 2/2. In terms of biological role, catalyzes a reversible aldol reaction between acetaldehyde and D-glyceraldehyde 3-phosphate to generate 2-deoxy-D-ribose 5-phosphate. This is Deoxyribose-phosphate aldolase from Streptococcus pneumoniae serotype 19F (strain G54).